The chain runs to 499 residues: tRNA-specific adenosine deaminase 1 (499 aa).

Residues 63–498 (SMGTGTKCIG…IRNPPDYHQF (436 aa)) enclose the A to I editase domain. Position 87 (His-87) interacts with Zn(2+). The active-site Proton donor is Glu-89. The 1D-myo-inositol hexakisphosphate site is built by Arg-93 and Arg-94. Residue Cys-142 participates in Zn(2+) binding. Disordered regions lie at residues 170–194 (PVQE…SPVA) and 212–237 (HHGT…EPDA). Positions 178 to 187 (EDSKDKRNCE) are enriched in basic and acidic residues. A Phosphoserine modification is found at Ser-191. Cys-294 serves as a coordination point for Zn(2+). Positions 297, 300, 430, and 466 each coordinate 1D-myo-inositol hexakisphosphate.

This sequence belongs to the ADAT1 family. The cofactor is 1D-myo-inositol hexakisphosphate.

The enzyme catalyses adenosine(37) in tRNA(Ala) + H2O + H(+) = inosine(37) in tRNA(Ala) + NH4(+). Its function is as follows. Specifically deaminates adenosine-37 to inosine in tRNA-Ala. In Mus musculus (Mouse), this protein is tRNA-specific adenosine deaminase 1 (Adat1).